Here is a 560-residue protein sequence, read N- to C-terminus: NADH-quinone oxidoreductase subunit C/D (560 aa).

The segment at 2–157 is NADH dehydrogenase I subunit C; it reads NKLENLKQLL…NNQQACTNSL (156 aa). The interval 175 to 560 is NADH dehydrogenase I subunit D; that stretch reads KYLPLNIGPS…MNLIAGELDR (386 aa).

The protein in the N-terminal section; belongs to the complex I 30 kDa subunit family. It in the C-terminal section; belongs to the complex I 49 kDa subunit family. As to quaternary structure, NDH-1 is composed of 13 different subunits. Subunits NuoB, CD, E, F, and G constitute the peripheral sector of the complex.

The protein resides in the cytoplasm. It localises to the cell inner membrane. It catalyses the reaction a quinone + NADH + 5 H(+)(in) = a quinol + NAD(+) + 4 H(+)(out). NDH-1 shuttles electrons from NADH, via FMN and iron-sulfur (Fe-S) centers, to quinones in the respiratory chain. The immediate electron acceptor for the enzyme in this species is believed to be ubiquinone. Couples the redox reaction to proton translocation (for every two electrons transferred, four hydrogen ions are translocated across the cytoplasmic membrane), and thus conserves the redox energy in a proton gradient. The sequence is that of NADH-quinone oxidoreductase subunit C/D from Bdellovibrio bacteriovorus (strain ATCC 15356 / DSM 50701 / NCIMB 9529 / HD100).